A 226-amino-acid chain; its full sequence is ATP synthase F(0) complex subunit a (226 aa).

6 helical membrane-spanning segments follow: residues 11–31 (APTI…TLLI), 68–88 (WSLM…LGLL), 97–117 (QLSM…ITGL), 138–158 (IPML…ALAV), 164–184 (ITAG…LSTI), and 194–214 (VLLM…AYVF).

Belongs to the ATPase A chain family. Component of the ATP synthase complex composed at least of ATP5F1A/subunit alpha, ATP5F1B/subunit beta, ATP5MC1/subunit c (homooctomer), MT-ATP6/subunit a, MT-ATP8/subunit 8, ATP5ME/subunit e, ATP5MF/subunit f, ATP5MG/subunit g, ATP5MK/subunit k, ATP5MJ/subunit j, ATP5F1C/subunit gamma, ATP5F1D/subunit delta, ATP5F1E/subunit epsilon, ATP5PF/subunit F6, ATP5PB/subunit b, ATP5PD/subunit d, ATP5PO/subunit OSCP. ATP synthase complex consists of a soluble F(1) head domain (subunits alpha(3) and beta(3)) - the catalytic core - and a membrane F(0) domain - the membrane proton channel (subunits c, a, 8, e, f, g, k and j). These two domains are linked by a central stalk (subunits gamma, delta, and epsilon) rotating inside the F1 region and a stationary peripheral stalk (subunits F6, b, d, and OSCP). Interacts with DNAJC30; interaction is direct.

The protein localises to the mitochondrion inner membrane. The enzyme catalyses H(+)(in) = H(+)(out). In terms of biological role, subunit a, of the mitochondrial membrane ATP synthase complex (F(1)F(0) ATP synthase or Complex V) that produces ATP from ADP in the presence of a proton gradient across the membrane which is generated by electron transport complexes of the respiratory chain. ATP synthase complex consist of a soluble F(1) head domain - the catalytic core - and a membrane F(1) domain - the membrane proton channel. These two domains are linked by a central stalk rotating inside the F(1) region and a stationary peripheral stalk. During catalysis, ATP synthesis in the catalytic domain of F(1) is coupled via a rotary mechanism of the central stalk subunits to proton translocation. With the subunit c (ATP5MC1), forms the proton-conducting channel in the F(0) domain, that contains two crucial half-channels (inlet and outlet) that facilitate proton movement from the mitochondrial intermembrane space (IMS) into the matrix. Protons are taken up via the inlet half-channel and released through the outlet half-channel, following a Grotthuss mechanism. The polypeptide is ATP synthase F(0) complex subunit a (Papio hamadryas (Hamadryas baboon)).